The sequence spans 106 residues: QNSIIFLINNGGYTIEVEIHDGPYNVIKNWNYTGLVEAFHNGEGACYTAKVRTEEELTEALEAALGPKKDCLCFIEVIVHKDDTSKELLEWGSRVSAANSRPPNPQ.

Asn10 and Gly12 together coordinate Mg(2+).

Belongs to the TPP enzyme family. Homotetramer. It depends on a metal cation as a cofactor. Thiamine diphosphate serves as cofactor.

It carries out the reaction a 2-oxocarboxylate + H(+) = an aldehyde + CO2. The sequence is that of Pyruvate decarboxylase 2 (PDC2) from Zea mays (Maize).